The chain runs to 564 residues: Efflux pump DEP3 (564 aa).

Over residues 1–12 the composition is skewed to polar residues; it reads MVYSSTSSSQNR. The interval 1 to 48 is disordered; the sequence is MVYSSTSSSQNRPDGEKHVEAVGSSTRIPSDELVDRGGGDTTTGKQSP. Over residues 29-38 the composition is skewed to basic and acidic residues; the sequence is PSDELVDRGG. The next 14 helical transmembrane spans lie at 65–85, 91–111, 122–142, 152–172, 185–205, 212–232, 255–275, 281–301, 332–352, 362–382, 386–406, 423–443, 452–472, and 528–548; these read STTL…PAII, LELL…ILLW, WVYI…GAAP, VIAG…VSVL, STVV…AFAA, WGFY…FLLF, AVIF…GGVV, GTVI…IVLL, FLSS…FQFI, VRLL…GFLM, GLIP…TALM, ILIG…VQSL, AVGA…AISG, and TIWA…FPLL.

The protein belongs to the major facilitator superfamily. TCR/Tet family.

It is found in the cell membrane. Functionally, efflux pump; part of the gene cluster that mediates the biosynthesis of depudecin, a highly oxidized eleven-carbon linear polyketide that acts as a histone deacetylase (HDAC) inhibitor and makes a small contribution to pathogenesis. Is presumed either to be responsible for exporting depudecin, to provide self-protection, or both. This is Efflux pump DEP3 from Alternaria brassicicola (Dark leaf spot agent).